The primary structure comprises 172 residues: Signal peptidase complex catalytic subunit sec11 (172 aa).

At 1–14 (MLSGLANPRQAAVQ) the chain is on the cytoplasmic side. Residues 15-35 (LMNFGLILSTAFMMWKGISVI) form a helical; Signal-anchor for type II membrane protein membrane-spanning segment. Over 36–172 (TDSPSPIVVV…MGLVVVLQRE (137 aa)) the chain is Lumenal. Catalysis depends on charge relay system residues serine 49 and histidine 90. An N-linked (GlcNAc...) asparagine glycan is attached at asparagine 111. Aspartate 115 acts as the Charge relay system in catalysis. The interval 158–169 (VMLGLMGLVVVL) is C-terminal short (CTS) helix.

Belongs to the peptidase S26B family. As to quaternary structure, component of the signal peptidase complex (SPC) composed of a catalytic subunit SEC11 and three accessory subunits SPC1, SPC2 and SPC3. The complex induces a local thinning of the ER membrane which is used to measure the length of the signal peptide (SP) h-region of protein substrates. This ensures the selectivity of the complex towards h-regions shorter than 18-20 amino acids. SPC associates with the translocon complex.

The protein resides in the endoplasmic reticulum membrane. The catalysed reaction is Cleavage of hydrophobic, N-terminal signal or leader sequences from secreted and periplasmic proteins.. Functionally, catalytic component of the signal peptidase complex (SPC) which catalyzes the cleavage of N-terminal signal sequences from nascent proteins as they are translocated into the lumen of the endoplasmic reticulum. Specifically cleaves N-terminal signal peptides that contain a hydrophobic alpha-helix (h-region) shorter than 18-20 amino acids. This is Signal peptidase complex catalytic subunit sec11 (sec11) from Neurospora crassa (strain ATCC 24698 / 74-OR23-1A / CBS 708.71 / DSM 1257 / FGSC 987).